Consider the following 127-residue polypeptide: Large ribosomal subunit protein bL17 (127 aa).

Belongs to the bacterial ribosomal protein bL17 family. Part of the 50S ribosomal subunit. Contacts protein L32.

The sequence is that of Large ribosomal subunit protein bL17 from Escherichia fergusonii (strain ATCC 35469 / DSM 13698 / CCUG 18766 / IAM 14443 / JCM 21226 / LMG 7866 / NBRC 102419 / NCTC 12128 / CDC 0568-73).